Reading from the N-terminus, the 130-residue chain is Small ribosomal subunit protein uS9 (130 aa).

Positions 98 to 130 are disordered; sequence LKRAGMLTRDPRMKERKKPGLKGARRSPQFSKR. Basic residues predominate over residues 111 to 130; that stretch reads KERKKPGLKGARRSPQFSKR.

This sequence belongs to the universal ribosomal protein uS9 family.

In Macrococcus caseolyticus (strain JCSC5402) (Macrococcoides caseolyticum), this protein is Small ribosomal subunit protein uS9.